Here is a 108-residue protein sequence, read N- to C-terminus: MQATKTHVRKGETVMVIAGKDKNKTGTVMQFLPKKDGIIVEGLNMVKRHVKARGNEPGGIKEKEASIHISNVMPYCAKCAKPVRVRLKVLENGDKQRLCAKCGNSLEK.

It belongs to the universal ribosomal protein uL24 family. As to quaternary structure, part of the 50S ribosomal subunit.

In terms of biological role, one of two assembly initiator proteins, it binds directly to the 5'-end of the 23S rRNA, where it nucleates assembly of the 50S subunit. Functionally, one of the proteins that surrounds the polypeptide exit tunnel on the outside of the subunit. In Pelobacter propionicus (strain DSM 2379 / NBRC 103807 / OttBd1), this protein is Large ribosomal subunit protein uL24.